Consider the following 463-residue polypeptide: Vacuolar cation/proton exchanger 1 (463 aa).

An N-acetylalanine modification is found at Ala-2. Residues 2-68 (AGIVTEPWSV…LKDFLSNLQE (67 aa)) lie on the Cytoplasmic side of the membrane. The segment at 25–33 (SRELRLGRT) is required for autoinhibitory regulation. Residues 56-62 (YKGLKDF) are required for interaction with autoinhibitory region. A helical membrane pass occupies residues 69 to 89 (VILGTKLAILFPAIPAAIICT). The tract at residues 87-95 (ICTYCGVSQ) is required for Ca(2+)/H(+) exchange activity. Over 90 to 96 (YCGVSQP) the chain is Extracellular. A helical membrane pass occupies residues 97 to 116 (WIFGLSLLGLTPLAERVSFL). Topologically, residues 117–127 (TEQLAFYTGPT) are cytoplasmic. Residues 128 to 148 (LGGLLNATCGNATELIIAILA) traverse the membrane as a helical segment. The tract at residues 137–172 (GNATELIIAILALTNNKVAVVKYSLLGSILSNLLLV) is cation selection. Over 149–161 (LTNNKVAVVKYSL) the chain is Extracellular. The helical transmembrane segment at 162-182 (LGSILSNLLLVLGTSLFCGGI) threads the bilayer. Over 183 to 197 (ANIRREQRFDRKQAD) the chain is Cytoplasmic. A helical membrane pass occupies residues 198 to 218 (VNFFLLLLGFLCHLLPLLVGY). The Extracellular segment spans residues 219 to 238 (LKNGEASAAVLSDMQLSISR). Residues 239-259 (GFSIVMLISYIAYLVFQLWTH) traverse the membrane as a helical segment. Residues 260–281 (RQLFDAQEQEDEYDDDVEQETA) are Cytoplasmic-facing. A helical transmembrane segment spans residues 282–302 (VISFWSGFAWLVGMTLVIALL). Residues 303-325 (SEYVVATIEEASDKWNLSVSFIS) are Extracellular-facing. N-linked (GlcNAc...) asparagine glycosylation occurs at Asn-318. Residues 326 to 346 (IILLPIVGNAAEHAGAVIFAF) form a helical membrane-spanning segment. The cation selection stretch occupies residues 333–368 (GNAAEHAGAVIFAFKNKLDISLGVALGSATQIGLFV). Topologically, residues 347 to 360 (KNKLDISLGVALGS) are cytoplasmic. Residues 361-381 (ATQIGLFVVPLTIIVAWILGI) traverse the membrane as a helical segment. Residues 382–384 (NMD) lie on the Extracellular side of the membrane. A helical transmembrane segment spans residues 385 to 405 (LNFGPLETGCLAVSIIITAFT). The Cytoplasmic segment spans residues 406–411 (LQDGSS). A helical transmembrane segment spans residues 412–432 (HYMKGLVLLLCYFIIAICFFV). Over 433–463 (DKLPQKQNAIHLGHQAMNNVVTATGGGVFSS) the chain is Extracellular.

It belongs to the Ca(2+):cation antiporter (CaCA) (TC 2.A.19) family. Cation/proton exchanger (CAX) subfamily. Interacts with GRXS14 and CXIP4. As to expression, expressed at low levels in leaves, stems and flowers.

The protein localises to the vacuole membrane. With respect to regulation, activated by monothiol glutaredoxin GRXS14 and CXIP4. Inhibited by excess of Ca(2+) and Cd(2+), Na(+) and K(+), but not Mn(2+). Its function is as follows. Vacuolar cation/proton exchanger (CAX). Translocates Ca(2+) and other metal ions into vacuoles using the proton gradient formed by H(+)-ATPase and H(+)-pyrophosphatase. Involved in ion homeostasis in association with CAX3. May play a role in cold-acclimation response. The polypeptide is Vacuolar cation/proton exchanger 1 (CAX1) (Arabidopsis thaliana (Mouse-ear cress)).